The sequence spans 318 residues: NADH-ubiquinone oxidoreductase chain 1 (318 aa).

8 consecutive transmembrane segments (helical) span residues 2-22 (FMAN…FLTL), 69-89 (MLYL…WTPL), 98-118 (FNLG…SILW), 140-160 (ISYE…SGSF), 171-191 (HSWL…STLA), 222-242 (LFFM…TTIF), 253-273 (ETYS…FLWI), and 285-305 (LMHL…MWYI).

This sequence belongs to the complex I subunit 1 family. Core subunit of respiratory chain NADH dehydrogenase (Complex I) which is composed of 45 different subunits.

It localises to the mitochondrion inner membrane. It carries out the reaction a ubiquinone + NADH + 5 H(+)(in) = a ubiquinol + NAD(+) + 4 H(+)(out). Core subunit of the mitochondrial membrane respiratory chain NADH dehydrogenase (Complex I) which catalyzes electron transfer from NADH through the respiratory chain, using ubiquinone as an electron acceptor. Essential for the catalytic activity and assembly of complex I. This is NADH-ubiquinone oxidoreductase chain 1 (MT-ND1) from Saguinus leucopus (Silvery-brown bare-face tamarin).